Reading from the N-terminus, the 283-residue chain is Cyclin-C (283 aa).

Positions 46–144 (NVIQALGEHL…ILECEFYLLE (99 aa)) constitute a Cyclin N-terminal domain. The segment at 252–283 (TILSKMPKPKPPPNSEGEQGPNGSQNSSYSQS) is disordered. Positions 272 to 283 (PNGSQNSSYSQS) are enriched in polar residues. Ser-275 carries the phosphoserine modification.

The protein belongs to the cyclin family. Cyclin C subfamily. In terms of assembly, component of the Mediator complex, which is composed of MED1, MED4, MED6, MED7, MED8, MED9, MED10, MED11, MED12, MED13, MED13L, MED14, MED15, MED16, MED17, MED18, MED19, MED20, MED21, MED22, MED23, MED24, MED25, MED26, MED27, MED29, MED30, MED31, CCNC, CDK8 and CDC2L6/CDK11. The MED12, MED13, CCNC and CDK8 subunits form a distinct module termed the CDK8 module. Mediator containing the CDK8 module is less active than Mediator lacking this module in supporting transcriptional activation. Individual preparations of the Mediator complex lacking one or more distinct subunits have been variously termed ARC, CRSP, DRIP, PC2, SMCC and TRAP. The cylin/CDK pair formed by CCNC/CDK8 also associates with the large subunit of RNA polymerase II. Highest levels in pancreas. High levels in heart, liver, skeletal muscle and kidney. Low levels in brain.

The protein localises to the nucleus. Functionally, component of the Mediator complex, a coactivator involved in regulated gene transcription of nearly all RNA polymerase II-dependent genes. Mediator functions as a bridge to convey information from gene-specific regulatory proteins to the basal RNA polymerase II transcription machinery. Mediator is recruited to promoters by direct interactions with regulatory proteins and serves as a scaffold for the assembly of a functional preinitiation complex with RNA polymerase II and the general transcription factors. Binds to and activates cyclin-dependent kinase CDK8 that phosphorylates the CTD (C-terminal domain) of the large subunit of RNA polymerase II (RNAp II), which may inhibit the formation of a transcription initiation complex. The polypeptide is Cyclin-C (CCNC) (Homo sapiens (Human)).